The primary structure comprises 1534 residues: DNA-directed RNA polymerase subunit beta'' (1534 aa).

Zn(2+) is bound by residues Cys220, Cys296, Cys303, and Cys306. Composition is skewed to basic and acidic residues over residues 644-668 and 678-688; these read RTQE…RTRE and PENKYRTREGE. 2 disordered regions span residues 644-698 and 719-800; these read RTQE…EDEY and YRTL…KKEG. Composition is skewed to acidic residues over residues 744-762 and 770-789; these read GEYE…SSED and TLEE…EYGS.

It belongs to the RNA polymerase beta' chain family. RpoC2 subfamily. As to quaternary structure, in plastids the minimal PEP RNA polymerase catalytic core is composed of four subunits: alpha, beta, beta', and beta''. When a (nuclear-encoded) sigma factor is associated with the core the holoenzyme is formed, which can initiate transcription. Zn(2+) is required as a cofactor.

The protein resides in the plastid. The protein localises to the chloroplast. The catalysed reaction is RNA(n) + a ribonucleoside 5'-triphosphate = RNA(n+1) + diphosphate. Its function is as follows. DNA-dependent RNA polymerase catalyzes the transcription of DNA into RNA using the four ribonucleoside triphosphates as substrates. The chain is DNA-directed RNA polymerase subunit beta'' from Saccharum officinarum (Sugarcane).